The primary structure comprises 360 residues: Protein DVR-1 (360 aa).

The N-terminal stretch at 1-16 (MVWLRLWAFLHILAIV) is a signal peptide. The propeptide occupies 17–246 (TLDPELKRRE…LRCKRPRRKR (230 aa)). N-linked (GlcNAc...) asparagine glycosylation is found at Asn113, Asn181, and Asn301. 3 disulfide bridges follow: Cys259/Cys325, Cys288/Cys357, and Cys292/Cys359.

It belongs to the TGF-beta family. Homodimer. In terms of tissue distribution, vegetal region of the egg.

The protein localises to the secreted. Its function is as follows. Serves to facilitate the differentiation of either mesoderm or endoderm either as a cofactor in an instructive signal or by providing permissive environment. This is Protein DVR-1 (dvr1) from Xenopus laevis (African clawed frog).